The following is a 210-amino-acid chain: Na(+)-translocating NADH-quinone reductase subunit D (210 aa).

A run of 6 helical transmembrane segments spans residues 14–34 (PIVN…ALAV), 42–62 (LVMA…ISLI), 72–92 (IIVQ…LLQA), 103–123 (VFVG…AYAM), 131–151 (FMDG…VGFV), and 178–198 (NGML…IWII).

It belongs to the NqrDE/RnfAE family. In terms of assembly, composed of six subunits; NqrA, NqrB, NqrC, NqrD, NqrE and NqrF.

The protein resides in the cell inner membrane. It carries out the reaction a ubiquinone + n Na(+)(in) + NADH + H(+) = a ubiquinol + n Na(+)(out) + NAD(+). NQR complex catalyzes the reduction of ubiquinone-1 to ubiquinol by two successive reactions, coupled with the transport of Na(+) ions from the cytoplasm to the periplasm. NqrA to NqrE are probably involved in the second step, the conversion of ubisemiquinone to ubiquinol. The polypeptide is Na(+)-translocating NADH-quinone reductase subunit D (Shewanella putrefaciens (strain CN-32 / ATCC BAA-453)).